The chain runs to 226 residues: UPF0111 protein PH0637 (226 aa).

This sequence belongs to the UPF0111 family.

In Pyrococcus horikoshii (strain ATCC 700860 / DSM 12428 / JCM 9974 / NBRC 100139 / OT-3), this protein is UPF0111 protein PH0637.